The following is a 496-amino-acid chain: MRSYIKVLTMCFLGLILFVPTALADNSVKRVGGSNRYGTAVQISKQMYSTASTAVIVGGSSYADAISAAPLAYQKNAPLLYTNSDKLSYETKTRLKEMQTKNVIIVGGTPAVSSNTANQIKSLGISIKRIAGSNRYDTAARVAKAMGATSKAVILNGFLYADAPAVIPYAAKNGYPILFTNKTSINSATTSVIKDKGISSTVVVGGTGSISNTVYNKLPSPTRISGSNRYELAANIVQKLNLSTSTVYVSNGFSYPDSIAGATLAAKKKQSLILTNGENLSTGARKIIGSKNMSNFMIIGNTPAVSTKVANQLKNPVVGETIFIDPGHGDQDSGAIGNGLLEKEVNLDIAKRVNTKLNASGALPVLSRSNDTFYSLQERVNKAASAQADLFLSIHANANDSSSPNGSETYYDTTYQAANSKRLAEQIQPKLAANLGTRDRGVKTAAFYVIKYSKMPSVLVETAFITNASDASKLKQAVYKDKAAQAIHDGTVSYYR.

The N-terminal stretch at 1–24 (MRSYIKVLTMCFLGLILFVPTALA) is a signal peptide. Tandem repeats lie at residues 30–128 (RVGG…ISIK), 129–222 (RIAG…PSPT), and 223–318 (RISG…NPVV). The interval 30–318 (RVGGSNRYGT…VANQLKNPVV (289 aa)) is 3 X tandem repeats. The region spanning 322-490 (IFIDPGHGDQ…DKAAQAIHDG (169 aa)) is the MurNAc-LAA domain.

The protein belongs to the N-acetylmuramoyl-L-alanine amidase 3 family.

The protein localises to the secreted. The protein resides in the cell wall. The catalysed reaction is Hydrolyzes the link between N-acetylmuramoyl residues and L-amino acid residues in certain cell-wall glycopeptides.. Functionally, autolysins are cell wall hydrolases involved in some important biological processes such as cell separation, cell-wall turnover, competence for genetic transformation, formation of the flagella - in particular of its basal body - and sporulation. Has a high affinity for teichoic acid-endowed peptidoglycan. LytC is required for efficient swarming motility but not at the level of cell separation or flagellum biosynthesis. Rather, LytC appears to be important for proper flagellar function. This Bacillus subtilis (strain 168) protein is N-acetylmuramoyl-L-alanine amidase LytC (lytC).